Here is a 409-residue protein sequence, read N- to C-terminus: Probable type I inositol 1,4,5-trisphosphate 5-phosphatase (409 aa).

The protein belongs to the inositol 1,4,5-trisphosphate 5-phosphatase type I family.

It carries out the reaction 1D-myo-inositol 1,4,5-trisphosphate + H2O = 1D-myo-inositol 1,4-bisphosphate + phosphate. It catalyses the reaction 1D-myo-inositol 1,3,4,5-tetrakisphosphate + H2O = 1D-myo-inositol 1,3,4-trisphosphate + phosphate. This Caenorhabditis elegans protein is Probable type I inositol 1,4,5-trisphosphate 5-phosphatase (ipp-5).